The sequence spans 573 residues: MQDTKYYEPTNIFRQPAINIKKRSDKKRILQSMMTLSTYKKTWQNNTSKMNSPILRKASDNFNDYYTTKKLKSDYWKLYGVDESELSIPSDMSIVDNILLVSTMNEKDNLKLFEISAEKKLKELQTITVPGKPITCICLLPMVDFPPQIFPSSQINPNHNQLILTGHQDGIVNLIATSTYKGCAKIIKRFNHNKFLKSTVSTSIPILEITPKTAPILKVSPWNKTGFVSLLNDSLFIYDLKSNLDCIKTPIFLQSYPGINSFAVNEFHDPFLLALVGSKFGPNGISLLDLRTNLYIPDILDNSISAGCGKDHLQRKNTSLDCVWISNHHVAQSLNDKIQIWDIQSCDGKPVCELYAKKGYIESLKFNENTGALYSSDDQGFVICWDLQNLQNMKYGELVHGFNSISLDSESELLLTKQVFQCGNIIVSGMSDKNICLKSNDTKANGKGCGFLFLDMANDGSLVTLDNFCELGLHQICQVQFNVDTGKIIDGNGTGKSGISDSSMLSLSNESDHSMTETSDDMFSNSGNWDCSSANTVSEGRLNDDQEDIVFTKRMYSVNDVHLSGSTIDTTVV.

WD repeat units lie at residues 144–185 (DFPP…GCAK), 315–351 (RKNT…GKPV), 356–395 (AKKG…NMKY), and 397–448 (ELVH…NGKG). Residues 500 to 509 (SDSSMLSLSN) are compositionally biased toward low complexity. The interval 500-519 (SDSSMLSLSNESDHSMTETS) is disordered. Residue K553 forms a Glycyl lysine isopeptide (Lys-Gly) (interchain with G-Cter in ubiquitin) linkage.

Belongs to the WD repeat DSE1 family.

The protein localises to the bud neck. In terms of biological role, involved in cell wall metabolism and required for the separation of the mother and daughter cells. In Saccharomyces cerevisiae (strain ATCC 204508 / S288c) (Baker's yeast), this protein is Protein DSE1 (DSE1).